A 327-amino-acid polypeptide reads, in one-letter code: GTP 3',8-cyclase (327 aa).

Residues 7–232 enclose the Radical SAM core domain; the sequence is HHDRQFRYLR…IKRDRTAGPA (226 aa). R16 provides a ligand contact to GTP. Positions 23 and 27 each coordinate [4Fe-4S] cluster. Residue Y29 coordinates S-adenosyl-L-methionine. C30 is a [4Fe-4S] cluster binding site. R66 is a binding site for GTP. Position 70 (G70) interacts with S-adenosyl-L-methionine. Position 97 (T97) interacts with GTP. An S-adenosyl-L-methionine-binding site is contributed by S121. GTP is bound at residue K158. Residue M192 participates in S-adenosyl-L-methionine binding. [4Fe-4S] cluster is bound by residues C255 and C258. 260-262 contacts GTP; that stretch reads RLR. C272 is a [4Fe-4S] cluster binding site.

The protein belongs to the radical SAM superfamily. MoaA family. Monomer and homodimer. Requires [4Fe-4S] cluster as cofactor.

The enzyme catalyses GTP + AH2 + S-adenosyl-L-methionine = (8S)-3',8-cyclo-7,8-dihydroguanosine 5'-triphosphate + 5'-deoxyadenosine + L-methionine + A + H(+). It participates in cofactor biosynthesis; molybdopterin biosynthesis. Catalyzes the cyclization of GTP to (8S)-3',8-cyclo-7,8-dihydroguanosine 5'-triphosphate. The polypeptide is GTP 3',8-cyclase (Synechococcus elongatus (strain ATCC 33912 / PCC 7942 / FACHB-805) (Anacystis nidulans R2)).